We begin with the raw amino-acid sequence, 522 residues long: MKYKDLRDFVGRLETIGELRRISQTVSPVLEMTELCDRVLRAGGPALLFESKAQHAFPVLGNLFGTPRRVALGMGVDAQAGEGDGAALESLRDVGRLLSALKEPEPPKGLKDAGKLLSLAKAVWDMAPKTVSAPPCQEIVWEGNDVDLARLPIQTCWPGDAGPLITWGLTVTKGPNKPRQNLGIYRQQLIGRNKLIMRWLAHRGGALDFREFALQNPGKPYPVAVVLGADPATILGAVTPVPDTLSEYQFAGLLRGGRTELAKCLTPGVDGLQVPARAEIVLEGFIYPQEGAPSPAPAGAPPRPVKGASAAYEHALEGPYGDHTGYYNEQEWFPVFTVERITMRRDAIYHSTYTGKPPDEPAVLGVALNEVFVPLLQKQFTEITDFYLPPEGCSYRMAIVQMKKSYPGHAKRVMFGVWSFLRQFMYTKFIVVVDEDVNIRDWKEVIWAITTRIDPARDTVLVDRTPIDYLDFASPVAGLGSKMGLDATNKWPGETDREWGRPIVMDAAVKQRIDSLWNELGL.

Position 181 (asparagine 181) interacts with Mn(2+). Prenylated FMN-binding positions include 184–186 (IYR), 198–200 (RWL), and 203–204 (RG). Glutamate 247 serves as a coordination point for Mn(2+). The Proton donor role is filled by aspartate 322.

It belongs to the UbiD family. As to quaternary structure, homohexamer. It depends on prenylated FMN as a cofactor. Requires Mn(2+) as cofactor.

The protein localises to the cell membrane. The catalysed reaction is a 4-hydroxy-3-(all-trans-polyprenyl)benzoate + H(+) = a 2-(all-trans-polyprenyl)phenol + CO2. It participates in cofactor biosynthesis; ubiquinone biosynthesis. Catalyzes the decarboxylation of 3-octaprenyl-4-hydroxy benzoate to 2-octaprenylphenol, an intermediate step in ubiquinone biosynthesis. This Paraburkholderia xenovorans (strain LB400) protein is 3-octaprenyl-4-hydroxybenzoate carboxy-lyase.